A 470-amino-acid chain; its full sequence is FRIGIDA-like protein 1 (470 aa).

Residues 336-369 (KDQNLESEFTQEKVEERVEELEKNKALRKRNTTN) are a coiled coil. Residues 355 to 400 (ELEKNKALRKRNTTNPPKQEPQQKGKKRTRDCKNGSQVPVPSQQLL) form a disordered region. Over residues 388–400 (NGSQVPVPSQQLL) the composition is skewed to polar residues.

The protein belongs to the Frigida family. Component of the transcription activator complex FRI-C composed of FRI, FRL1, SUF4, FLX and FES1. Interacts with FRI and SUF4. Expressed during seed development and in dry seed. Preferentially expressed in the chalazal endosperm during early stages of seed development.

Required for FRI-mediated up-regulation of FLC transcripts, but not redundant with FRI and only partially redundant with FRL2. Required for the stabilization of the FRI-C complex. The protein is FRIGIDA-like protein 1 (FRL1) of Arabidopsis thaliana (Mouse-ear cress).